We begin with the raw amino-acid sequence, 286 residues long: Ribosome-inactivating protein momordin II (286 aa).

The N-terminal stretch at 1-23 (MVKCLLLSFLIIAIFIGVPTAKG) is a signal peptide. Residue glutamate 181 is part of the active site.

It belongs to the ribosome-inactivating protein family. Type 1 RIP subfamily.

It carries out the reaction Endohydrolysis of the N-glycosidic bond at one specific adenosine on the 28S rRNA.. This chain is Ribosome-inactivating protein momordin II, found in Momordica balsamina (Bitter gourd).